The chain runs to 467 residues: Cell division protein FtsP (467 aa).

A signal peptide (tat-type signal) is located at residues 1–28; it reads MRSLTRRDFLKSGILASSLSCIPQSVMA.

The protein belongs to the FtsP family. Post-translationally, predicted to be exported by the Tat system. The position of the signal peptide cleavage has not been experimentally proven.

Its subcellular location is the periplasm. Its function is as follows. Cell division protein that is required for growth during stress conditions. May be involved in protecting or stabilizing the divisomal assembly under conditions of stress. The chain is Cell division protein FtsP from Histophilus somni (strain 2336) (Haemophilus somnus).